A 271-amino-acid chain; its full sequence is Ferric vulnibactin reductase VuuB (271 aa).

Positions Val-8 to Ile-131 constitute an FAD-binding FR-type domain.

This sequence belongs to the SIP oxidoreductase family. As to quaternary structure, monomer. Requires FAD as cofactor.

Its subcellular location is the cytoplasm. It carries out the reaction 2 a Fe(II)-siderophore + NAD(+) + H(+) = 2 a Fe(III)-siderophore + NADH. Functionally, ferric-siderophore reductase involved in iron removal from the siderophores after their transport into the cell. Acts as a major ferric-vulnibactin reductase catalyzing the reduction of Fe(3+)-vulnibactin, a catecholate siderophore synthesized by V.vulnificus. Catalyzes reduction of Fe(3+)-aerobactin, a citrate-hydroxamate siderophore produced by other bacteria, in the absence of IutB. Catalyzes reduction of Fe(3+)-vibriobactin in vitro. No activity with ferrioxamine B or Fe(3+)-enterobactin. Catalyzes reduction of ferric chelating compounds Fe(3+)-nitrilotriacetic acid (NTA), Fe(3+)-citrate and Fe(3+)-EDTA as well as non-complexed FeCl3 in the presence of NADH as its electron donor and FAD as its cofactor in vitro. Highest activity with Fe(3+)-NTA as electron acceptor. The protein is Ferric vulnibactin reductase VuuB of Vibrio vulnificus.